Here is a 211-residue protein sequence, read N- to C-terminus: Hypoxanthine-guanine phosphoribosyltransferase (211 aa).

The interval M1–Y20 is disordered. Residues K66, E125–T133, K157, and D185 each bind GMP. Residue D129 is the Proton acceptor of the active site. Position 185 (D185) interacts with Mg(2+).

This sequence belongs to the purine/pyrimidine phosphoribosyltransferase family. It depends on Mg(2+) as a cofactor.

It localises to the cytoplasm. It catalyses the reaction IMP + diphosphate = hypoxanthine + 5-phospho-alpha-D-ribose 1-diphosphate. The catalysed reaction is GMP + diphosphate = guanine + 5-phospho-alpha-D-ribose 1-diphosphate. It functions in the pathway purine metabolism; IMP biosynthesis via salvage pathway; IMP from hypoxanthine: step 1/1. In terms of biological role, converts guanine to guanosine monophosphate, and hypoxanthine to inosine monophosphate. Transfers the 5-phosphoribosyl group from 5-phosphoribosylpyrophosphate onto the purine. Plays a central role in the generation of purine nucleotides through the purine salvage pathway. In Leishmania donovani, this protein is Hypoxanthine-guanine phosphoribosyltransferase.